A 210-amino-acid chain; its full sequence is Small ribosomal subunit protein bS6 (210 aa).

Residues proline 99 to glycine 210 form a disordered region. Positions asparagine 120 to glycine 210 are enriched in basic and acidic residues.

Belongs to the bacterial ribosomal protein bS6 family.

Its function is as follows. Binds together with bS18 to 16S ribosomal RNA. This Prochlorococcus marinus (strain SARG / CCMP1375 / SS120) protein is Small ribosomal subunit protein bS6.